The primary structure comprises 161 residues: 3-hydroxyacyl-[acyl-carrier-protein] dehydratase FabZ (161 aa).

The active site involves H64.

This sequence belongs to the thioester dehydratase family. FabZ subfamily.

It is found in the cytoplasm. The catalysed reaction is a (3R)-hydroxyacyl-[ACP] = a (2E)-enoyl-[ACP] + H2O. Involved in unsaturated fatty acids biosynthesis. Catalyzes the dehydration of short chain beta-hydroxyacyl-ACPs and long chain saturated and unsaturated beta-hydroxyacyl-ACPs. The polypeptide is 3-hydroxyacyl-[acyl-carrier-protein] dehydratase FabZ (Paramagnetospirillum magneticum (strain ATCC 700264 / AMB-1) (Magnetospirillum magneticum)).